The chain runs to 316 residues: Carbamate kinase-like protein YahI (316 aa).

This sequence belongs to the carbamate kinase family.

The chain is Carbamate kinase-like protein YahI (yahI) from Escherichia coli (strain K12).